A 900-amino-acid polypeptide reads, in one-letter code: Iodate reductase subunit IdrA (900 aa).

Positions 1–21 (MSENIKQGGAGTFMQAPQDSV) are disordered. Residues C35, C38, and C42 each contribute to the [3Fe-4S] cluster site.

The protein belongs to the prokaryotic molybdopterin-containing oxidoreductase family. In terms of assembly, the iodate reductase (Idr) complex is composed of a molybdopterin-dependent iodate reductase (IdrA and IdrB subunits) and two associated peroxidases (IdrP1 and IdrP2). Requires [3Fe-4S] cluster as cofactor. Mo-bis(molybdopterin guanine dinucleotide) serves as cofactor.

It is found in the periplasm. In terms of biological role, involved in iodate respiration. May accept electrons from cytochrome c551, and catalyze the reduction of iodate (IO(3)(-)) to produce the chemically unstable intermediate hypoiodous acid (HIO). This intermediate then undergoes abiotic disproportionation to yield two molecules of iodide (I(-)) and one molecule of iodate. The resultant iodate subsequently cycles back into the reductive pathway. The initial reduction of iodate may inadvertently produce low levels of incidental toxic H(2)O(2), which is detoxified by IdrP1 and IdrP2. In Denitromonas iodatirespirans, this protein is Iodate reductase subunit IdrA.